A 308-amino-acid chain; its full sequence is Ribonuclease Z (308 aa).

Positions 61, 63, 65, 66, 139, 210, and 268 each coordinate Zn(2+). The Proton acceptor role is filled by Asp-65.

This sequence belongs to the RNase Z family. Homodimer. Zn(2+) serves as cofactor.

It catalyses the reaction Endonucleolytic cleavage of RNA, removing extra 3' nucleotides from tRNA precursor, generating 3' termini of tRNAs. A 3'-hydroxy group is left at the tRNA terminus and a 5'-phosphoryl group is left at the trailer molecule.. In terms of biological role, zinc phosphodiesterase, which displays some tRNA 3'-processing endonuclease activity. Probably involved in tRNA maturation, by removing a 3'-trailer from precursor tRNA. The chain is Ribonuclease Z from Natronomonas pharaonis (strain ATCC 35678 / DSM 2160 / CIP 103997 / JCM 8858 / NBRC 14720 / NCIMB 2260 / Gabara) (Halobacterium pharaonis).